The primary structure comprises 604 residues: Glutamine--fructose-6-phosphate aminotransferase [isomerizing] (604 aa).

Catalysis depends on C2, which acts as the Nucleophile; for GATase activity. Residues 2 to 218 (CGIVGVVGNR…DKELVVLTKD (217 aa)) enclose the Glutamine amidotransferase type-2 domain. SIS domains lie at 284–423 (IVKS…ANGK) and 456–594 (VANL…VDKP). K599 (for Fru-6P isomerization activity) is an active-site residue.

Homodimer.

The protein localises to the cytoplasm. The catalysed reaction is D-fructose 6-phosphate + L-glutamine = D-glucosamine 6-phosphate + L-glutamate. Its function is as follows. Catalyzes the first step in hexosamine metabolism, converting fructose-6P into glucosamine-6P using glutamine as a nitrogen source. The polypeptide is Glutamine--fructose-6-phosphate aminotransferase [isomerizing] (Streptococcus mutans serotype c (strain ATCC 700610 / UA159)).